We begin with the raw amino-acid sequence, 89 residues long: Small ribosomal subunit protein uS15 (89 aa).

The protein belongs to the universal ribosomal protein uS15 family. As to quaternary structure, part of the 30S ribosomal subunit. Forms a bridge to the 50S subunit in the 70S ribosome, contacting the 23S rRNA.

One of the primary rRNA binding proteins, it binds directly to 16S rRNA where it helps nucleate assembly of the platform of the 30S subunit by binding and bridging several RNA helices of the 16S rRNA. Its function is as follows. Forms an intersubunit bridge (bridge B4) with the 23S rRNA of the 50S subunit in the ribosome. The chain is Small ribosomal subunit protein uS15 from Vibrio parahaemolyticus serotype O3:K6 (strain RIMD 2210633).